A 520-amino-acid chain; its full sequence is GMP synthase [glutamine-hydrolyzing] (520 aa).

The Glutamine amidotransferase type-1 domain occupies 12 to 205 (KIIVLDYGSQ…AISICGGRGD (194 aa)). The Nucleophile role is filled by cysteine 89. Residues histidine 179 and glutamate 181 contribute to the active site. In terms of domain architecture, GMPS ATP-PPase spans 206–395 (WSMDNFIDMQ…LGMPDEVVWR (190 aa)). 233–239 (SGGVDSS) is an ATP binding site.

Homodimer.

The catalysed reaction is XMP + L-glutamine + ATP + H2O = GMP + L-glutamate + AMP + diphosphate + 2 H(+). The protein operates within purine metabolism; GMP biosynthesis; GMP from XMP (L-Gln route): step 1/1. Functionally, catalyzes the synthesis of GMP from XMP. The polypeptide is GMP synthase [glutamine-hydrolyzing] (Streptococcus equi subsp. equi (strain 4047)).